The chain runs to 1435 residues: Neuropathy target esterase sws (1435 aa).

Topologically, residues 1-35 (MDVLELLRVSGSNMYYSTFLADAWCYYISNQITMT) are lumenal. The helical transmembrane segment at 36-56 (MYLYCALGVLSMLFIGWFVYF) threads the bilayer. Over 57 to 1435 (KRLARLRLRH…NTNNETKNYL (1379 aa)) the chain is Cytoplasmic. 176-303 (IFGHFEKPIF…IRVIQVIMIR (128 aa)) is an a nucleoside 3',5'-cyclic phosphate binding site. Low complexity predominate over residues 361–372 (AASGTAGSTHTA). Disordered stretches follow at residues 361–405 (AASG…ELSG) and 422–452 (NSYP…QPEV). The span at 435 to 449 (GNLSTRRGSITQQEQ) shows a compositional bias: polar residues. Phosphoserine is present on serine 443. A nucleoside 3',5'-cyclic phosphate is bound by residues 474–601 (ELGL…VVRR) and 590–717 (IVLD…LSHR). The PNPLA domain maps to 944 to 1110 (LVLGGGGARG…VNNLPGHLWR (167 aa)). A GXGXXG motif is present at residues 948–953 (GGGARG). The GXSXG signature appears at 975-979 (GVSIG). Catalysis depends on serine 977, which acts as the Nucleophile. Aspartate 1097 serves as the catalytic Proton acceptor. The short motif at 1097–1099 (DGG) is the DGA/G element. The tract at residues 1308 to 1435 (MDKATQSTPP…NTNNETKNYL (128 aa)) is disordered. A compositionally biased stretch (polar residues) spans 1311–1322 (ATQSTPPLQSKA). Basic and acidic residues-rich tracts occupy residues 1330 to 1361 (SKEE…RELS) and 1393 to 1424 (MDKK…KENR). The segment covering 1425–1435 (SNTNNETKNYL) has biased composition (polar residues).

It belongs to the NTE family. In terms of assembly, interacts with Pka-C3; interaction inhibits the catalytic function of Pka-C3 and the esterase activity of sws.

Its subcellular location is the endoplasmic reticulum membrane. It catalyses the reaction a 1-acyl-sn-glycero-3-phosphocholine + H2O = sn-glycerol 3-phosphocholine + a fatty acid + H(+). Functionally, phospholipase B that deacylates intracellular phosphatidylcholine (PtdCho), generating glycerophosphocholine (GroPtdCho). This deacylation occurs at both sn-2 and sn-1 positions of PtdCho. Its specific chemical modification by certain organophosphorus (OP) compounds leads to distal axonopathy. Plays a role in the signaling mechanism between neurons and glia that regulates glia wrapping during development of the adult brain. Essential for membrane lipid homeostasis and cell survival in both neurons and glia of the adult brain. In Drosophila persimilis (Fruit fly), this protein is Neuropathy target esterase sws.